We begin with the raw amino-acid sequence, 77 residues long: Small nuclear ribonucleoprotein G (77 aa).

Positions 2–77 constitute a Sm domain; the sequence is VSTPELKKYM…IISLEALDAI (76 aa).

The protein belongs to the snRNP Sm proteins family. As to quaternary structure, component of the Sm core complex, present in spliceosomal snRNP U1, U2, U4/U6 and U5. The core complex contains SMB1, SMD1, SMD2, SMD3, SME1, SMX3 and SMX2 (Sm proteins B, D1, D2, D3, E, F and G, respectively), and is probably a heptameric ring structure. SMX2 specifically interacts with SME1. Belongs to the CWC complex (or CEF1-associated complex), a spliceosome sub-complex reminiscent of a late-stage spliceosome composed of the U2, U5 and U6 snRNAs and at least BUD13, BUD31, BRR2, CDC40, CEF1, CLF1, CUS1, CWC2, CWC15, CWC21, CWC22, CWC23, CWC24, CWC25, CWC27, ECM2, HSH155, IST3, ISY1, LEA1, MSL1, NTC20, PRP8, PRP9, PRP11, PRP19, PRP21, PRP22, PRP45, PRP46, SLU7, SMB1, SMD1, SMD2, SMD3, SMX2, SMX3, SNT309, SNU114, SPP2, SYF1, SYF2, RSE1 and YJU2. Component of the U4/U6-U5 tri-snRNP complex composed of the U4, U6 and U5 snRNAs and at least PRP3, PRP4, PRP6, PRP8, PRP18, PRP31, PRP38, SNU13, SNU23, SNU66, SNU114, SPP381, SMB1, SMD1, SMD2, SMD3, SMX2, SMX3, LSM2, LSM3, LSM4, LSM5, LSM6, LSM7, LSM8, BRR2 and DIB1.

It localises to the nucleus. Its subcellular location is the cytoplasm. Its function is as follows. Plays a role in pre-mRNA splicing as a core component of the spliceosomal U1, U2, U4 and U5 small nuclear ribonucleoproteins (snRNPs), the building blocks of the spliceosome. In Saccharomyces cerevisiae (strain ATCC 204508 / S288c) (Baker's yeast), this protein is Small nuclear ribonucleoprotein G (SMX2).